We begin with the raw amino-acid sequence, 322 residues long: uncharacterized protein (322 aa).

Belongs to the glycosyltransferase 2 family.

This is an uncharacterized protein from Nostoc sp. (strain PCC 7120 / SAG 25.82 / UTEX 2576).